Here is a 360-residue protein sequence, read N- to C-terminus: Dynein intermediate light chain dil1 (360 aa).

The protein belongs to the dynein light intermediate chain DYN3 family. As to quaternary structure, the dynein complex consists of at least two heavy chains and a number of intermediate and light chains. Interacts with rga3, sec10, sec16, syp1, rvb2, spbc19c7.04c, spbc2f12.05 and spac3a11.10c. Post-translationally, the N-terminal part is acetylated.

The protein resides in the cytoplasm. Its subcellular location is the cytoskeleton. In terms of biological role, component of the cytoplasmic dynein which acts as a motor for the intracellular retrograde motility of vesicles and organelles along microtubules. Promotes oscillatory nuclear movement and efficient pairing of homologous centromeres during meiotic prophase. The protein is Dynein intermediate light chain dil1 (dil1) of Schizosaccharomyces pombe (strain 972 / ATCC 24843) (Fission yeast).